A 66-amino-acid polypeptide reads, in one-letter code: Large ribosomal subunit protein uL29 (66 aa).

Belongs to the universal ribosomal protein uL29 family.

The chain is Large ribosomal subunit protein uL29 from Bacillus licheniformis (strain ATCC 14580 / DSM 13 / JCM 2505 / CCUG 7422 / NBRC 12200 / NCIMB 9375 / NCTC 10341 / NRRL NRS-1264 / Gibson 46).